A 626-amino-acid polypeptide reads, in one-letter code: Janus kinase and microtubule-interacting protein 1 (626 aa).

The tract at residues 1–365 (MSKKGRSKGE…KIKNLTRENV (365 aa)) is mediates association with microtubules. Coiled coils occupy residues 19 to 254 (VQMA…REAE) and 284 to 413 (ERDV…DDLS). Residues 365–626 (VEMKEKLSAQ…ILFEPKLKFM (262 aa)) are mediates interaction with TYK2 and GABBR1. Residue serine 382 is modified to Phosphoserine. Residues 452–461 (ETLSETSCNT) are compositionally biased toward polar residues. The disordered stretch occupies residues 452–480 (ETLSETSCNTDRTDRAPATPEEDLDDTTT). Residue threonine 470 is modified to Phosphothreonine. Positions 490–604 (QLTREYQALQ…EFRVLELEVR (115 aa)) form a coiled coil.

This sequence belongs to the JAKMIP family. As to quaternary structure, homodimer. Forms a complex with GABBR1 and KIF5B/kinesin-1. Interacts with JAK1 and TYK2. In terms of processing, phosphorylated.

The protein localises to the cytoplasm. The protein resides in the cytoskeleton. It localises to the membrane. Associates with microtubules and may play a role in the microtubule-dependent transport of the GABA-B receptor. May play a role in JAK1 signaling and regulate microtubule cytoskeleton rearrangements. This is Janus kinase and microtubule-interacting protein 1 (JAKMIP1) from Bos taurus (Bovine).